The sequence spans 1393 residues: DNA-directed RNA polymerase subunit beta'' (1393 aa).

Residues Cys-220, Cys-291, Cys-298, and Cys-301 each coordinate Zn(2+).

It belongs to the RNA polymerase beta' chain family. RpoC2 subfamily. In plastids the minimal PEP RNA polymerase catalytic core is composed of four subunits: alpha, beta, beta', and beta''. When a (nuclear-encoded) sigma factor is associated with the core the holoenzyme is formed, which can initiate transcription. Zn(2+) is required as a cofactor.

It localises to the plastid. Its subcellular location is the chloroplast. The catalysed reaction is RNA(n) + a ribonucleoside 5'-triphosphate = RNA(n+1) + diphosphate. In terms of biological role, DNA-dependent RNA polymerase catalyzes the transcription of DNA into RNA using the four ribonucleoside triphosphates as substrates. In Gossypium hirsutum (Upland cotton), this protein is DNA-directed RNA polymerase subunit beta''.